A 499-amino-acid chain; its full sequence is Probable cytosol aminopeptidase (499 aa).

The Mn(2+) site is built by Lys267 and Asp272. The active site involves Lys279. Mn(2+) is bound by residues Asp290, Asp349, and Glu351. Residue Arg353 is part of the active site.

This sequence belongs to the peptidase M17 family. Mn(2+) is required as a cofactor.

The protein resides in the cytoplasm. The catalysed reaction is Release of an N-terminal amino acid, Xaa-|-Yaa-, in which Xaa is preferably Leu, but may be other amino acids including Pro although not Arg or Lys, and Yaa may be Pro. Amino acid amides and methyl esters are also readily hydrolyzed, but rates on arylamides are exceedingly low.. It carries out the reaction Release of an N-terminal amino acid, preferentially leucine, but not glutamic or aspartic acids.. In terms of biological role, presumably involved in the processing and regular turnover of intracellular proteins. Catalyzes the removal of unsubstituted N-terminal amino acids from various peptides. This is Probable cytosol aminopeptidase from Buchnera aphidicola subsp. Acyrthosiphon pisum (strain 5A).